Here is a 124-residue protein sequence, read N- to C-terminus: Fluoride-specific ion channel FluC (124 aa).

4 consecutive transmembrane segments (helical) span residues 4–24 (LIFV…ISIF), 35–55 (FGTL…YALG), 62–82 (PEIK…FSTF), and 102–122 (IALN…LVFS). Gly74 and Thr77 together coordinate Na(+).

It belongs to the fluoride channel Fluc/FEX (TC 1.A.43) family.

It is found in the cell inner membrane. It carries out the reaction fluoride(in) = fluoride(out). Na(+) is not transported, but it plays an essential structural role and its presence is essential for fluoride channel function. Functionally, fluoride-specific ion channel. Important for reducing fluoride concentration in the cell, thus reducing its toxicity. This is Fluoride-specific ion channel FluC from Shewanella loihica (strain ATCC BAA-1088 / PV-4).